A 116-amino-acid chain; its full sequence is uncharacterized protein (116 aa).

An N-terminal signal peptide occupies residues 1-21 (MAPSTAMLIMGLLKLPRLRLA).

This is an uncharacterized protein from Saccharomyces cerevisiae (strain ATCC 204508 / S288c) (Baker's yeast).